The chain runs to 301 residues: uncharacterized protein (301 aa).

Over 1–5 (MSYKK) the chain is Extracellular. The chain crosses the membrane as a helical span at residues 6-26 (FVYFINLFFLLGATLLTFFLI). The Cytoplasmic portion of the chain corresponds to 27-112 (LAGGRTTGVL…NRNAYYYLSR (86 aa)). Residues 113-133 (VGWAMLLIGLFFLLITLVSVI) traverse the membrane as a helical segment. The Extracellular portion of the chain corresponds to 134–143 (ASLIRYNRRT). A helical transmembrane segment spans residues 144–164 (AALATAMSWITLFFITLSACL). Residues 165 to 191 (YTGCYAKAVKAFHHENRDARLGPKNFG) are Cytoplasmic-facing. Residues 192–212 (LIWTTVFLLIVNAICCTIMVA) form a helical membrane-spanning segment. Residues 213–301 (THKRNEYIYD…YTEQNVPVVS (89 aa)) are Extracellular-facing. The tract at residues 254–301 (VQQSQSHQNHRFFKKLRTKKRTVTSAGDEPDRVQEERVYTEQNVPVVS) is disordered. Basic residues predominate over residues 261 to 275 (QNHRFFKKLRTKKRT). Basic and acidic residues predominate over residues 282 to 292 (EPDRVQEERVY).

This sequence belongs to the SUR7 family.

It localises to the cell membrane. Involved in sporulation and affects the sphingolipid composition of the plasma membrane. This is an uncharacterized protein from Saccharomyces cerevisiae (strain ATCC 204508 / S288c) (Baker's yeast).